An 84-amino-acid chain; its full sequence is Small ribosomal subunit protein bS20 (84 aa).

The protein belongs to the bacterial ribosomal protein bS20 family.

Binds directly to 16S ribosomal RNA. The protein is Small ribosomal subunit protein bS20 of Latilactobacillus sakei subsp. sakei (strain 23K) (Lactobacillus sakei subsp. sakei).